The chain runs to 146 residues: UPF0260 protein Swoo_2117 (146 aa).

Belongs to the UPF0260 family.

This is UPF0260 protein Swoo_2117 from Shewanella woodyi (strain ATCC 51908 / MS32).